Reading from the N-terminus, the 351-residue chain is MKALAKLKKEPGIWMIDDAPMPEYGYNDVLIKIKKTAICGTDLHIYNWDKWSQATIPVPMITGHEFAGEVVAKGNGVTSVDVGDRVSGEGHLVCGQCRNCRAGKRHLCRKTIGIGVNVQGAFAEYLVMPAVNVFKIPDSISDDIASTFDPMGNAIHTALSFNLTGEDVLITGAGPIGLMAVKIARFCGARRIVITDINKYRLQMARDFGATVAVNVSEFQNQQQLTAQMRKVMSEIGMTEGFDVGLEMSGINSAISMMLDVMNHGGKLSLLGISAGDISVDWGAILFKGLTLKGIYGREMFETWYLMTSMLQAGMDMEPIITHRLHIDDYQKGFEIMKSGQCGKVILDWSR.

A Zn(2+)-binding site is contributed by C39. Residues T41 and H44 each act as charge relay system in the active site. H64, E65, C94, C97, C100, and C108 together coordinate Zn(2+). NAD(+) contacts are provided by residues I176, D196, R201, 271 to 273 (LGI), and 295 to 296 (IY).

This sequence belongs to the zinc-containing alcohol dehydrogenase family. In terms of assembly, homotetramer. The cofactor is Zn(2+).

The protein resides in the cytoplasm. It carries out the reaction L-threonine + NAD(+) = (2S)-2-amino-3-oxobutanoate + NADH + H(+). Its pathway is amino-acid degradation; L-threonine degradation via oxydo-reductase pathway; glycine from L-threonine: step 1/2. Functionally, catalyzes the NAD(+)-dependent oxidation of L-threonine to 2-amino-3-ketobutyrate. The chain is L-threonine 3-dehydrogenase from Francisella philomiragia subsp. philomiragia (strain ATCC 25017 / CCUG 19701 / FSC 153 / O#319-036).